Reading from the N-terminus, the 627-residue chain is Capsid vertex component 2 (627 aa).

The segment at 1–56 (MFGRGLPPLKFGQIGGDGWSTVLADPGNRLIVANAHRSEPRLRVETLIREELLTSR) is interaction with major capsid protein/MCP. Residues 458–480 (LSGDGDPIRAPGSRPPAAAEATL) form a disordered region.

Belongs to the herpesviridae CVC2 protein family. In terms of assembly, heterodimerizes with CVC1. Interacts with major capsid protein/MCP and triplex capsid protein 1/TRX1 at the pentamer vertices. Interacts with the large tegument protein/LTP.

It localises to the virion. The protein resides in the host nucleus. In terms of biological role, capsid vertex-specific component that plays a role during viral DNA encapsidation, assuring correct genome cleavage and presumably stabilizing capsids that contain full-length viral genomes. Participates in the interaction between the capsid and the tegument through interaction with the large tegument protein/LTP. The polypeptide is Capsid vertex component 2 (Psittacid herpesvirus 1 (isolate Amazon parrot/-/97-0001/1997) (PsHV-1)).